Consider the following 116-residue polypeptide: Putative pterin-4-alpha-carbinolamine dehydratase (116 aa).

This sequence belongs to the pterin-4-alpha-carbinolamine dehydratase family.

It carries out the reaction (4aS,6R)-4a-hydroxy-L-erythro-5,6,7,8-tetrahydrobiopterin = (6R)-L-erythro-6,7-dihydrobiopterin + H2O. This chain is Putative pterin-4-alpha-carbinolamine dehydratase, found in Stenotrophomonas maltophilia (strain K279a).